The chain runs to 28 residues: Mast cell degranulating peptide (28 aa).

Cystine bridges form between cysteine 2–cysteine 18 and cysteine 4–cysteine 22.

Expressed by the venom gland.

The protein localises to the secreted. Functionally, mast cell degranulating peptide. This Bombus pensylvanicus (American bumblebee) protein is Mast cell degranulating peptide.